The primary structure comprises 139 residues: Small ribosomal subunit protein uS12 (139 aa).

Residues 119 to 139 are disordered; that stretch reads GVDKRRQQRSAYGAKKPKPKS.

The protein belongs to the universal ribosomal protein uS12 family. In terms of assembly, part of the 30S ribosomal subunit. Contacts proteins S8 and S17. May interact with IF1 in the 30S initiation complex.

Functionally, with S4 and S5 plays an important role in translational accuracy. In terms of biological role, interacts with and stabilizes bases of the 16S rRNA that are involved in tRNA selection in the A site and with the mRNA backbone. Located at the interface of the 30S and 50S subunits, it traverses the body of the 30S subunit contacting proteins on the other side and probably holding the rRNA structure together. The combined cluster of proteins S8, S12 and S17 appears to hold together the shoulder and platform of the 30S subunit. This chain is Small ribosomal subunit protein uS12, found in Mycoplasma genitalium (strain ATCC 33530 / DSM 19775 / NCTC 10195 / G37) (Mycoplasmoides genitalium).